Consider the following 127-residue polypeptide: MAFTGKYQLESHENFEAFMKAVGVPDDEVEKGKDIKSISEIHQDGKDFKVTVTAGTKVILYSFTVGEECELETFTGDRAKTVVQMDGNKLTAFVKGIESVTELDGDTISNTLSFNGIVYKRISRRIS.

The protein belongs to the calycin superfamily. Fatty-acid binding protein (FABP) family. In terms of tissue distribution, in adults, weakly expressed in the intestine.

It localises to the cytoplasm. Functionally, binds free fatty acids and their coenzyme A derivatives, bilirubin, and some other small molecules in the cytoplasm. May be involved in intracellular lipid transport. This Danio rerio (Zebrafish) protein is Fatty acid binding protein 1-A, liver.